Here is a 1361-residue protein sequence, read N- to C-terminus: Protein transport protein SEC16B homolog (1361 aa).

A Phosphoserine modification is found at Ser46. 7 disordered regions span residues 82 to 109, 487 to 513, 984 to 1013, 1025 to 1062, 1163 to 1204, 1216 to 1235, and 1306 to 1361; these read NEGASGSVGEDEPSSIAPEAVQFPHSDA, VDDAPQSFQSSQLFSPSAGRSSDGRPP, PVGGMPPPAPHSTKGNLQGNEYQHQQQEAT, SSLMPPASVEPTHESGGSGRRMAVHTRSVSEPDFGRTP, ENKS…ARGR, NPPGRGNSHTMIPSPSVQTA, and SVNG…EVEL. Over residues 491–503 the composition is skewed to low complexity; the sequence is PQSFQSSQLFSPS. Over residues 996-1013 the composition is skewed to polar residues; sequence TKGNLQGNEYQHQQQEAT. 3 stretches are compositionally biased toward polar residues: residues 1169–1200, 1222–1234, and 1308–1325; these read IPSNGNWSSGGPTPSENSSGIPPISHGSNQFS, NSHTMIPSPSVQT, and NGDNHQPPTSRRTASWSG. The segment covering 1326–1354 has biased composition (low complexity); sequence NFNTSFTPPTSPSTFKPVLLNSSSSSLGE.

Belongs to the SEC16 family.

The protein resides in the golgi apparatus. The protein localises to the endoplasmic reticulum. In terms of biological role, required for protein transport from the endoplasmic reticulum to the Golgi apparatus. In Arabidopsis thaliana (Mouse-ear cress), this protein is Protein transport protein SEC16B homolog.